Consider the following 155-residue polypeptide: Putative pre-16S rRNA nuclease (155 aa).

It belongs to the YqgF nuclease family.

Its subcellular location is the cytoplasm. Its function is as follows. Could be a nuclease involved in processing of the 5'-end of pre-16S rRNA. The polypeptide is Putative pre-16S rRNA nuclease (Corynebacterium jeikeium (strain K411)).